A 334-amino-acid polypeptide reads, in one-letter code: Glycerol-3-phosphate dehydrogenase [NAD(P)+] (334 aa).

The NADPH site is built by Ser13, Phe14, and Lys108. The sn-glycerol 3-phosphate site is built by Lys108, Gly137, and Thr139. Ala141 lines the NADPH pocket. Sn-glycerol 3-phosphate-binding residues include Lys193, Asp246, Ser256, Arg257, and Asn258. The active-site Proton acceptor is the Lys193. Arg257 contributes to the NADPH binding site. Residues Val281 and Glu283 each contribute to the NADPH site.

Belongs to the NAD-dependent glycerol-3-phosphate dehydrogenase family.

The protein localises to the cytoplasm. The catalysed reaction is sn-glycerol 3-phosphate + NAD(+) = dihydroxyacetone phosphate + NADH + H(+). It catalyses the reaction sn-glycerol 3-phosphate + NADP(+) = dihydroxyacetone phosphate + NADPH + H(+). The protein operates within membrane lipid metabolism; glycerophospholipid metabolism. In terms of biological role, catalyzes the reduction of the glycolytic intermediate dihydroxyacetone phosphate (DHAP) to sn-glycerol 3-phosphate (G3P), the key precursor for phospholipid synthesis. The polypeptide is Glycerol-3-phosphate dehydrogenase [NAD(P)+] (Bartonella tribocorum (strain CIP 105476 / IBS 506)).